The sequence spans 469 residues: 1-aminocyclopropane-1-carboxylate synthase 8 (469 aa).

The substrate site is built by Glu-47 and Tyr-85. The residue at position 272 (Lys-272) is an N6-(pyridoxal phosphate)lysine.

The protein belongs to the class-I pyridoxal-phosphate-dependent aminotransferase family. Homodimer and heterodimer. In vivo, the relevance of heterodimerization with other ACS enzymes is however unsure. Interacts with GRF3. Requires pyridoxal 5'-phosphate as cofactor. Post-translationally, may be processed at its C-terminus. As to expression, expressed in roots. Expressed at low level in flowers and siliques.

The enzyme catalyses S-adenosyl-L-methionine = 1-aminocyclopropane-1-carboxylate + S-methyl-5'-thioadenosine + H(+). Its pathway is alkene biosynthesis; ethylene biosynthesis via S-adenosyl-L-methionine; ethylene from S-adenosyl-L-methionine: step 1/2. Functionally, 1-aminocyclopropane-1-carboxylate synthase (ACS) enzymes catalyze the conversion of S-adenosyl-L-methionine (SAM) into 1-aminocyclopropane-1-carboxylate (ACC), a direct precursor of ethylene. This is 1-aminocyclopropane-1-carboxylate synthase 8 (ACS8) from Arabidopsis thaliana (Mouse-ear cress).